A 447-amino-acid chain; its full sequence is Phosphoglucosamine mutase (447 aa).

Serine 107 (phosphoserine intermediate) is an active-site residue. Mg(2+) contacts are provided by serine 107, aspartate 246, aspartate 248, and aspartate 250. At serine 107 the chain carries Phosphoserine.

It belongs to the phosphohexose mutase family. Mg(2+) serves as cofactor. Post-translationally, activated by phosphorylation.

It carries out the reaction alpha-D-glucosamine 1-phosphate = D-glucosamine 6-phosphate. Functionally, catalyzes the conversion of glucosamine-6-phosphate to glucosamine-1-phosphate. This is Phosphoglucosamine mutase from Ralstonia nicotianae (strain ATCC BAA-1114 / GMI1000) (Ralstonia solanacearum).